The primary structure comprises 343 residues: Fructose-bisphosphate aldolase (343 aa).

A D-glyceraldehyde 3-phosphate-binding site is contributed by Ser-53. The Proton donor role is filled by Asp-95. Positions 96, 131, 161, and 212 each coordinate Zn(2+). Gly-213 contacts dihydroxyacetone phosphate. Zn(2+) is bound at residue His-252. Residues 253–255 and 274–277 each bind dihydroxyacetone phosphate; these read GGS and NIDT.

Belongs to the class II fructose-bisphosphate aldolase family. Zn(2+) is required as a cofactor.

It catalyses the reaction beta-D-fructose 1,6-bisphosphate = D-glyceraldehyde 3-phosphate + dihydroxyacetone phosphate. It functions in the pathway carbohydrate degradation; glycolysis; D-glyceraldehyde 3-phosphate and glycerone phosphate from D-glucose: step 4/4. Catalyzes the aldol condensation of dihydroxyacetone phosphate (DHAP or glycerone-phosphate) with glyceraldehyde 3-phosphate (G3P) to form fructose 1,6-bisphosphate (FBP) in gluconeogenesis and the reverse reaction in glycolysis. The sequence is that of Fructose-bisphosphate aldolase (fba) from Streptomyces coelicolor (strain ATCC BAA-471 / A3(2) / M145).